The following is a 452-amino-acid chain: Caspase-2 (452 aa).

Ala-2 bears the N-acetylalanine mark. The propeptide occupies 2–169 (AASSGRSQSS…TMEHSLDNGD (168 aa)). One can recognise a CARD domain in the interval 32–121 (MHPDHQETLK…GHLEDLLLTT (90 aa)). Ser-157 carries the phosphoserine modification. Catalysis depends on residues His-277 and Cys-320. Residues 326–333 (DRGVDQQD) constitute a propeptide that is removed on maturation. Basic and acidic residues predominate over residues 327–336 (RGVDQQDGKN). The interval 327–349 (RGVDQQDGKNHAQSPGCEESDAG) is disordered. Ser-340 is subject to Phosphoserine.

The protein belongs to the peptidase C14A family. In terms of assembly, heterotetramer that consists of two anti-parallel arranged heterodimers, each one formed by a p18 subunit and a p12 subunit. Forms a complex named the PIDDosome with PIDD1 and CRADD. Interacts with NOL3 (via CARD domain); inhibits CASP2 activity in a phosphorylation-dependent manner. In terms of processing, the mature protease can process its own propeptide, but not that of other caspases.

The enzyme catalyses Strict requirement for an Asp residue at P1, with 316-Asp being essential for proteolytic activity and has a preferred cleavage sequence of Val-Asp-Val-Ala-Asp-|-.. Involved in the activation cascade of caspases responsible for apoptosis execution. Might function by either activating some proteins required for cell death or inactivating proteins necessary for cell survival. Associates with PIDD1 and CRADD to form the PIDDosome, a complex that activates CASP2 and triggers apoptosis in response to genotoxic stress. The sequence is that of Caspase-2 (Casp2) from Rattus norvegicus (Rat).